The following is an 84-amino-acid chain: Toxin BmKaTx13 (84 aa).

Positions 1–19 (MNYLVMISFALLLMKGVES) are cleaved as a signal peptide. An LCN-type CS-alpha/beta domain is found at 21–83 (RDAYIAKPEN…VPIRVPGKCH (63 aa)). 4 disulfides stabilise this stretch: C31–C82, C35–C55, C41–C65, and C45–C67. A propeptide (removed by a carboxypeptidase) is located at residue R84.

This sequence belongs to the long (4 C-C) scorpion toxin superfamily. Sodium channel inhibitor family. Alpha subfamily. Expressed by the venom gland.

It localises to the secreted. Its function is as follows. Alpha toxins bind voltage-independently at site-3 of sodium channels (Nav) and inhibit the inactivation of the activated channels, thereby blocking neuronal transmission. This toxin is active against mammals. This is Toxin BmKaTx13 from Olivierus martensii (Manchurian scorpion).